Reading from the N-terminus, the 87-residue chain is Protein moa-2 (87 aa).

The tract at residues Gly23–Ser87 is disordered. Composition is skewed to basic and acidic residues over residues Met26–Pro39 and Arg50–Pro63.

This is Protein moa-2 from Caenorhabditis elegans.